The chain runs to 185 residues: Translation initiation factor IF-3 (185 aa).

It belongs to the IF-3 family. Monomer.

Its subcellular location is the cytoplasm. In terms of biological role, IF-3 binds to the 30S ribosomal subunit and shifts the equilibrium between 70S ribosomes and their 50S and 30S subunits in favor of the free subunits, thus enhancing the availability of 30S subunits on which protein synthesis initiation begins. In Rickettsia typhi (strain ATCC VR-144 / Wilmington), this protein is Translation initiation factor IF-3.